The primary structure comprises 373 residues: Chaperone protein DnaJ (373 aa).

The region spanning 5–70 is the J domain; it reads DYYELLEVDR…EKRALYDQYG (66 aa). A CR-type zinc finger spans residues 134–211; it reads GTQKEVHYSF…CSGKGYRIEK (78 aa). Positions 147, 150, 163, 166, 185, 188, 199, and 202 each coordinate Zn(2+). CXXCXGXG motif repeat units lie at residues 147 to 154, 163 to 170, 185 to 192, and 199 to 206; these read CSACKGTG, CPECHGRG, CPRCHGQG, and CEECSGKG.

It belongs to the DnaJ family. As to quaternary structure, homodimer. The cofactor is Zn(2+).

The protein resides in the cytoplasm. Functionally, participates actively in the response to hyperosmotic and heat shock by preventing the aggregation of stress-denatured proteins and by disaggregating proteins, also in an autonomous, DnaK-independent fashion. Unfolded proteins bind initially to DnaJ; upon interaction with the DnaJ-bound protein, DnaK hydrolyzes its bound ATP, resulting in the formation of a stable complex. GrpE releases ADP from DnaK; ATP binding to DnaK triggers the release of the substrate protein, thus completing the reaction cycle. Several rounds of ATP-dependent interactions between DnaJ, DnaK and GrpE are required for fully efficient folding. Also involved, together with DnaK and GrpE, in the DNA replication of plasmids through activation of initiation proteins. The chain is Chaperone protein DnaJ from Nitratiruptor sp. (strain SB155-2).